Reading from the N-terminus, the 237-residue chain is Cytosolic-abundant heat soluble protein 1 (237 aa).

2 stretches are compositionally biased toward basic and acidic residues: residues 1–17 (MPYE…KTEQ) and 91–105 (VDMR…EARR). Disordered stretches follow at residues 1–35 (MPYE…VARE) and 85–105 (SGAS…EARR). Residues 98-201 (KLAEEARRDA…KEALERSRMA (104 aa)) adopt a coiled-coil conformation. CAHS motif stretches follow at residues 132 to 150 (YRHQ…LEKQ) and 169 to 187 (QKRE…LDRE). Residues 212 to 237 (AGHTVSGGTTVSSVDKVETVRERKHH) are disordered. Basic and acidic residues predominate over residues 226–237 (DKVETVRERKHH).

It belongs to the Cytosolic-abundant heat soluble protein (CAHS) family.

It is found in the cytoplasm. It localises to the nucleus. Functionally, CAHS proteins are cytosolic heat soluble proteins that seem to contribute to the anhydrobiosis in tardigrades, but their specific mechanisms are yet to be identified. It is possible that protection during anhydrobiosis might occur via the stabilization of vitrifying small molecules such as sugars, but not via the direct glass transition of CAHS proteins themselves. This is Cytosolic-abundant heat soluble protein 1 from Ramazzottius varieornatus (Water bear).